Here is a 670-residue protein sequence, read N- to C-terminus: Lebercilin-like protein (670 aa).

Positions 30-51 (KRSPGTGDFSRNSNASNKSVDY) are disordered. Residues 38–51 (FSRNSNASNKSVDY) show a composition bias toward polar residues. Coiled-coil stretches lie at residues 148 to 259 (LHKI…EREE) and 305 to 336 (AAQT…IKNI). Residues 374–393 (HQGTQKSDVPPLTTKGKKAT) are disordered. Residues 420 to 440 (EDSKRKYEDLSGEEKHLEVQI) adopt a coiled-coil conformation. Disordered stretches follow at residues 495 to 516 (RSMQ…YTKG), 557 to 580 (KHLS…SFGK), and 609 to 670 (LKTD…KIII). Basic and acidic residues-rich tracts occupy residues 560-572 (SNRE…HSDS) and 621-632 (GSEEPLQSKESH). Residues 651-662 (TVVNSIKPSSPT) show a composition bias toward polar residues.

It belongs to the LCA5 family.

The polypeptide is Lebercilin-like protein (LCA5L) (Homo sapiens (Human)).